The following is a 429-amino-acid chain: Choline kinase A2 (429 aa).

ATP-binding positions include 82-88, R111, 152-158, and Q257; these read KGGMSNM and EYIPSRP. 84–86 contacts substrate; the sequence is GMS. A Ca(2+)-binding site is contributed by E258. D301 contributes to the ATP binding site. Ca(2+) is bound by residues E320 and I323.

The protein belongs to the choline/ethanolamine kinase family. Homodimer. A small proportion exists as higher oligomers. Requires Mg(2+) as cofactor.

The catalysed reaction is choline + ATP = phosphocholine + ADP + H(+). The enzyme catalyses ethanolamine + ATP = phosphoethanolamine + ADP + H(+). It functions in the pathway phospholipid metabolism; phosphatidylcholine biosynthesis; phosphocholine from choline: step 1/1. The protein operates within phospholipid metabolism; phosphatidylethanolamine biosynthesis; phosphatidylethanolamine from ethanolamine: step 1/3. With respect to regulation, inhibited by Ca(2+). Mild inhibition by high levels of Mg(2+)(&gt;10 mM). Catalyzes the first step in phosphatidylcholine biosynthesis. May contribute to phosphatidylethanolamine biosynthesis. Phosphorylates choline and ethanolamine but the activity is much higher with choline. The chain is Choline kinase A2 from Caenorhabditis elegans.